Consider the following 879-residue polypeptide: Phosphoenolpyruvate carboxylase (879 aa).

Catalysis depends on residues histidine 138 and lysine 545.

This sequence belongs to the PEPCase type 1 family. Requires Mg(2+) as cofactor.

The enzyme catalyses oxaloacetate + phosphate = phosphoenolpyruvate + hydrogencarbonate. Functionally, forms oxaloacetate, a four-carbon dicarboxylic acid source for the tricarboxylic acid cycle. In Haemophilus influenzae (strain 86-028NP), this protein is Phosphoenolpyruvate carboxylase.